We begin with the raw amino-acid sequence, 159 residues long: Transcriptional repressor NrdR (159 aa).

A zinc finger lies at 3 to 34 (CPFCGSDNTSVKDSRAAEDDTAVRRRRVCESC). An ATP-cone domain is found at 49 to 139 (IIVVKRDGKR…VYRDFKDPSD (91 aa)).

It belongs to the NrdR family. It depends on Zn(2+) as a cofactor.

In terms of biological role, negatively regulates transcription of bacterial ribonucleotide reductase nrd genes and operons by binding to NrdR-boxes. This chain is Transcriptional repressor NrdR, found in Hyphomonas neptunium (strain ATCC 15444).